Here is a 158-residue protein sequence, read N- to C-terminus: NAD(P)H-quinone oxidoreductase subunit J, chloroplastic (158 aa).

This sequence belongs to the complex I 30 kDa subunit family. As to quaternary structure, NDH is composed of at least 16 different subunits, 5 of which are encoded in the nucleus.

Its subcellular location is the plastid. It localises to the chloroplast thylakoid membrane. It carries out the reaction a plastoquinone + NADH + (n+1) H(+)(in) = a plastoquinol + NAD(+) + n H(+)(out). It catalyses the reaction a plastoquinone + NADPH + (n+1) H(+)(in) = a plastoquinol + NADP(+) + n H(+)(out). Functionally, NDH shuttles electrons from NAD(P)H:plastoquinone, via FMN and iron-sulfur (Fe-S) centers, to quinones in the photosynthetic chain and possibly in a chloroplast respiratory chain. The immediate electron acceptor for the enzyme in this species is believed to be plastoquinone. Couples the redox reaction to proton translocation, and thus conserves the redox energy in a proton gradient. In Illicium oligandrum (Star anise), this protein is NAD(P)H-quinone oxidoreductase subunit J, chloroplastic.